The sequence spans 213 residues: Orotate phosphoribosyltransferase (213 aa).

5-phospho-alpha-D-ribose 1-diphosphate is bound at residue Lys26. 34–35 (FF) contacts orotate. 5-phospho-alpha-D-ribose 1-diphosphate-binding positions include 72 to 73 (YK), Arg99, Lys100, Lys103, His105, and 124 to 132 (DDVITAGTA). Residues Thr128 and Arg156 each contribute to the orotate site.

It belongs to the purine/pyrimidine phosphoribosyltransferase family. PyrE subfamily. In terms of assembly, homodimer. Mg(2+) serves as cofactor.

The catalysed reaction is orotidine 5'-phosphate + diphosphate = orotate + 5-phospho-alpha-D-ribose 1-diphosphate. It participates in pyrimidine metabolism; UMP biosynthesis via de novo pathway; UMP from orotate: step 1/2. Functionally, catalyzes the transfer of a ribosyl phosphate group from 5-phosphoribose 1-diphosphate to orotate, leading to the formation of orotidine monophosphate (OMP). The sequence is that of Orotate phosphoribosyltransferase from Salmonella arizonae (strain ATCC BAA-731 / CDC346-86 / RSK2980).